A 130-amino-acid chain; its full sequence is Fumarate reductase subunit C (130 aa).

The next 3 membrane-spanning stretches (helical) occupy residues 30-50 (EGTSIPAVWFSVLLIYGVFAL), 60-80 (FVSFLQNPLVLFLNILTLFAA), and 110-130 (IKALWVVTVVASAIILAVALL).

This sequence belongs to the FrdC family. As to quaternary structure, part of an enzyme complex containing four subunits: a flavoprotein (FrdA), an iron-sulfur protein (FrdB), and two hydrophobic anchor proteins (FrdC and FrdD).

The protein resides in the cell inner membrane. Functionally, two distinct, membrane-bound, FAD-containing enzymes are responsible for the catalysis of fumarate and succinate interconversion; fumarate reductase is used in anaerobic growth, and succinate dehydrogenase is used in aerobic growth. Anchors the catalytic components of the fumarate reductase complex to the cell inner membrane, binds quinones. The chain is Fumarate reductase subunit C from Yersinia pseudotuberculosis serotype O:1b (strain IP 31758).